Consider the following 1072-residue polypeptide: DNA-directed RNA polymerase subunit beta (1072 aa).

The protein belongs to the RNA polymerase beta chain family. As to quaternary structure, in plastids the minimal PEP RNA polymerase catalytic core is composed of four subunits: alpha, beta, beta', and beta''. When a (nuclear-encoded) sigma factor is associated with the core the holoenzyme is formed, which can initiate transcription.

The protein resides in the plastid. It localises to the chloroplast. The catalysed reaction is RNA(n) + a ribonucleoside 5'-triphosphate = RNA(n+1) + diphosphate. DNA-dependent RNA polymerase catalyzes the transcription of DNA into RNA using the four ribonucleoside triphosphates as substrates. The sequence is that of DNA-directed RNA polymerase subunit beta from Lepidium virginicum (Virginia pepperweed).